The sequence spans 440 residues: GTPase Der (440 aa).

2 EngA-type G domains span residues 4-169 (PVVA…PEED) and 178-353 (IKVA…DQAA). GTP is bound by residues 10-17 (GRPNVGKS), 57-61 (DTGGI), 120-123 (NKVD), 184-191 (GKPNVGKS), 231-235 (DTAGI), and 296-299 (NKWD). The KH-like domain maps to 354 to 438 (MRISTGVLND…PIKFILREKE (85 aa)).

The protein belongs to the TRAFAC class TrmE-Era-EngA-EngB-Septin-like GTPase superfamily. EngA (Der) GTPase family. As to quaternary structure, associates with the 50S ribosomal subunit.

GTPase that plays an essential role in the late steps of ribosome biogenesis. This Acetivibrio thermocellus (strain ATCC 27405 / DSM 1237 / JCM 9322 / NBRC 103400 / NCIMB 10682 / NRRL B-4536 / VPI 7372) (Clostridium thermocellum) protein is GTPase Der.